A 63-amino-acid polypeptide reads, in one-letter code: Synergistic-type venom protein C9S3, chain 1 (63 aa).

3 disulfide bridges follow: Cys-3-Cys-24, Cys-17-Cys-42, and Cys-46-Cys-57.

Belongs to the three-finger toxin family. Short-chain subfamily. Aminergic toxin sub-subfamily. Heterodimer of C9S3 chain 1 and chain 2 (AC P01409); disulfide-linked. Expressed by the venom gland.

It is found in the secreted. Its function is as follows. This protein shows a synergetic toxic effect in that it enhances the toxicity of other toxins. The sequence is that of Synergistic-type venom protein C9S3, chain 1 from Dendroaspis angusticeps (Eastern green mamba).